The chain runs to 268 residues: M1-specific T cell receptor alpha chain (268 aa).

The first 19 residues, M1–T19, serve as a signal peptide directing secretion. In terms of domain architecture, Ig-like V-type spans Q20 to C107. The tract at residues Q20–G109 is t cell receptor alpha variable 27. N-linked (GlcNAc...) asparagine glycosylation is found at N36 and N42. Residues C41 and C107 are joined by a disulfide bond. The segment at S45–S49 is CDR1. Positions V67 to T69 are CDR2. The CDR3 stretch occupies residues C107–F118. Residues G110–P128 form a t cell receptor alpha joining 42 region. Residues I129–S268 are t cell receptor alpha constant. An Ig-like C1-type domain is found at K147–T235. An intrachain disulfide couples C150 to C200. N160, N194, N205, and N241 each carry an N-linked (GlcNAc...) asparagine glycan. The tract at residues C222 to S243 is connecting peptide. Residues V244 to W266 form a helical membrane-spanning segment. Over S267 to S268 the chain is Cytoplasmic.

Disulfide-linked heterodimer with TRBV19*01J2S7*01C*02 beta chain. The TR primarily interacts via its CDR3-beta domain with M/matrix protein 1-derived peptide (GILGFVFTL) displayed by HLA-A*02.01 in a 'peg-notch' recognition mode. The alpha-beta TR associates with the transmembrane signaling CD3 coreceptor proteins to form the TR-CD3 (TCR). The assembly of alpha-beta TR heterodimers with CD3 occurs in the endoplasmic reticulum where a single alpha-beta TR heterodimer associates with one CD3D-CD3E heterodimer, one CD3G-CD3E heterodimer and one CD247 homodimer forming a stable octameric structure. CD3D-CD3E and CD3G-CD3E heterodimers preferentially associate with TR alpha and TR beta chains (via TM domain), respectively. The association of the CD247 homodimer is the last step of TCR assembly in the endoplasmic reticulum and is required for transport to the cell surface. Expressed in M/matrix protein 1-specific effector and memory CD8-positive T cells readily detectable in the peripheral blood, secondary lymphoid organs and lung (primary site of infection) of IAV infected individuals.

Its subcellular location is the cell membrane. The alpha chain of TRAV27*01J42*01C*01/TRBV19*01J2S7*01C*02 alpha-beta T cell receptor (TR) clonotype that is specific for HLA-A*02:01-restricted M/matrix protein 1 immunodominant epitope GILGFVFTL of influenza A virus (IAV). Classified as a public TR clonotype, it is preferentially selected in effector memory CD8-positive T cells among multiple HLA-A*02:01 carriers and confers long-lived immunity against IAV infection. Can cross-recognize sporadically emerging IAV variants by molecular mimicry, inducing immunity toward different influenza strains. Antigen recognition initiates TR-CD3 clustering on the cell surface and intracellular activation of LCK that phosphorylates the ITAM motifs of CD3G, CD3D, CD3E and CD247 enabling the recruitment of ZAP70. In turn, ZAP70 phosphorylates LAT, which recruits numerous signaling molecules to form the LAT signalosome. The LAT signalosome propagates signal branching to three major signaling pathways, the calcium, the mitogen-activated protein kinase (MAPK) kinase and the nuclear factor NF-kappa-B (NF-kB) pathways, leading to the mobilization of transcription factors that are critical for gene expression and essential for T cell differentiation into effector/memory T cells. The protein is M1-specific T cell receptor alpha chain of Homo sapiens (Human).